A 370-amino-acid polypeptide reads, in one-letter code: Biotin synthase (370 aa).

Residues 79 to 314 (CCGNVVDLCS…KQIIRYAGGR (236 aa)) enclose the Radical SAM core domain. The [4Fe-4S] cluster site is built by Cys97, Cys101, and Cys104. Residues Cys142, Cys179, Cys239, and Arg309 each coordinate [2Fe-2S] cluster.

This sequence belongs to the radical SAM superfamily. Biotin synthase family. Homodimer. It depends on [4Fe-4S] cluster as a cofactor. [2Fe-2S] cluster is required as a cofactor.

It carries out the reaction (4R,5S)-dethiobiotin + (sulfur carrier)-SH + 2 reduced [2Fe-2S]-[ferredoxin] + 2 S-adenosyl-L-methionine = (sulfur carrier)-H + biotin + 2 5'-deoxyadenosine + 2 L-methionine + 2 oxidized [2Fe-2S]-[ferredoxin]. Its pathway is cofactor biosynthesis; biotin biosynthesis; biotin from 7,8-diaminononanoate: step 2/2. Functionally, catalyzes the conversion of dethiobiotin (DTB) to biotin by the insertion of a sulfur atom into dethiobiotin via a radical-based mechanism. This Trichodesmium erythraeum (strain IMS101) protein is Biotin synthase.